Here is a 296-residue protein sequence, read N- to C-terminus: Putative thiosulfate sulfurtransferase SseA (296 aa).

2 consecutive Rhodanese domains span residues Gly-31 to Leu-138 and Ile-168 to Thr-286. Cys-245 acts as the Cysteine persulfide intermediate in catalysis. Substrate is bound at residue Arg-250.

The enzyme catalyses thiosulfate + hydrogen cyanide = thiocyanate + sulfite + 2 H(+). The sequence is that of Putative thiosulfate sulfurtransferase SseA (sseA) from Mycobacterium leprae (strain TN).